We begin with the raw amino-acid sequence, 207 residues long: Ribosomal RNA small subunit methyltransferase G (207 aa).

S-adenosyl-L-methionine-binding positions include Gly-76, Gln-81, 127 to 128 (VE), and Arg-141.

Belongs to the methyltransferase superfamily. RNA methyltransferase RsmG family.

It is found in the cytoplasm. The enzyme catalyses guanosine(527) in 16S rRNA + S-adenosyl-L-methionine = N(7)-methylguanosine(527) in 16S rRNA + S-adenosyl-L-homocysteine. Functionally, specifically methylates the N7 position of guanine in position 527 of 16S rRNA. This chain is Ribosomal RNA small subunit methyltransferase G, found in Neisseria meningitidis serogroup B (strain ATCC BAA-335 / MC58).